We begin with the raw amino-acid sequence, 625 residues long: Folylpolyglutamate synthase (625 aa).

141–144 is a binding site for ATP; that stretch reads GKGS. Serine 165, glutamate 234, and histidine 262 together coordinate Mg(2+). ATP is bound by residues arginine 384 and aspartate 414.

Belongs to the folylpolyglutamate synthase family. It depends on a monovalent cation as a cofactor.

Its subcellular location is the mitochondrion inner membrane. It localises to the mitochondrion matrix. The catalysed reaction is (6S)-5,6,7,8-tetrahydrofolyl-(gamma-L-Glu)(n) + L-glutamate + ATP = (6S)-5,6,7,8-tetrahydrofolyl-(gamma-L-Glu)(n+1) + ADP + phosphate + H(+). It participates in cofactor biosynthesis; tetrahydrofolylpolyglutamate biosynthesis. Catalyzes conversion of folates to polyglutamate derivatives allowing concentration of folate compounds in the cell and the intracellular retention of these cofactors, which are important substrates for most of the folate-dependent enzymes that are involved in one-carbon transfer reactions involved in purine, pyrimidine and amino acid synthesis. Essential for organellar and whole-plant folate homeostasis. This chain is Folylpolyglutamate synthase, found in Arabidopsis thaliana (Mouse-ear cress).